The chain runs to 721 residues: Ophiobolin F synthase oblA (721 aa).

A (7Z)-ophiobola-7,19-dien-3-ol synthase region spans residues 5–325 (YDQPYSVLLD…RYNLKAEWNE (321 aa)). Residues Asp97 and Asp101 each contribute to the Mg(2+) site. Position 97 (Asp97) interacts with substrate. A DDXXD 1 motif is present at residues 97-101 (DDVID). Substrate is bound by residues 185 to 188 (RSLD), Asn229, 233 to 237 (SFEKE), and 316 to 317 (RY). Residues 229–237 (NDLFSFEKE) carry the NSE/DTE motif. The geranylfarnesyl diphosphate synthase stretch occupies residues 326-721 (LQMLRAKHGV…LRLMMEMLKV (396 aa)). Residues 348–387 (SMDHIWKKGSTQGESKGEKRKRQSVNGTNGVNGTNGVKKP) are disordered. A compositionally biased stretch (low complexity) spans 372–384 (VNGTNGVNGTNGV). Isopentenyl diphosphate is bound by residues Lys432, Arg435, and His464. Mg(2+)-binding residues include Asp471 and Asp475. The DDXXD 2 motif lies at 471 to 475 (DDLED). Residue Arg480 participates in dimethylallyl diphosphate binding. Arg481 contributes to the isopentenyl diphosphate binding site. The dimethylallyl diphosphate site is built by Lys558, Thr559, Gln597, Asn604, Lys614, and Lys624.

This sequence in the N-terminal section; belongs to the terpene synthase family. It in the C-terminal section; belongs to the FPP/GGPP synthase family. It depends on Mg(2+) as a cofactor.

The catalysed reaction is isopentenyl diphosphate + (2E,6E)-farnesyl diphosphate = (2E,6E,10E)-geranylgeranyl diphosphate + diphosphate. The enzyme catalyses isopentenyl diphosphate + (2E,6E,10E)-geranylgeranyl diphosphate = (2E,6E,10E,14E)-geranylfarnesyl diphosphate + diphosphate. It catalyses the reaction (2E,6E,10E,14E)-geranylfarnesyl diphosphate + H2O = ophiobolin F + diphosphate. It functions in the pathway secondary metabolite biosynthesis; terpenoid biosynthesis. Bifunctional sesterterpene synthase; part of the gene cluster that mediates the biosynthesis of the sesterterpenes ophiobolins, fungal phytotoxins with potential anti-cancer activities. The first step of the pathway is performed by the sesterterpene synthase oblA that possesses both prenyl transferase and terpene cyclase activity, converting isopentenyl diphosphate and dimethylallyl diphosphate into geranylfarnesyl diphosphate (GFPP) and further converting GFPP into ophiobolin F, respectively. Other sesterterpenoids (C(25) terpenoids) are found as minor products of oblA. The cytochrome P450 monooxygenase oblB then catalyzes a four-step oxidative transformation of ophiobolin F to yield ophiobolin C. The FAD-dependent oxidoreductase oblC might be involved in a later oxidation step that produces ophiobolin A. In Cochliobolus heterostrophus (strain C5 / ATCC 48332 / race O) (Southern corn leaf blight fungus), this protein is Ophiobolin F synthase oblA.